The chain runs to 274 residues: Thiamine kinase (274 aa).

This sequence belongs to the thiamine kinase family.

It catalyses the reaction thiamine + ATP = thiamine phosphate + ADP + H(+). The protein operates within cofactor biosynthesis; thiamine diphosphate biosynthesis; thiamine phosphate from thiamine: step 1/1. In terms of biological role, catalyzes the ATP-dependent phosphorylation of thiamine to thiamine phosphate. Is involved in thiamine salvage. This is Thiamine kinase from Shigella boydii serotype 4 (strain Sb227).